Reading from the N-terminus, the 156-residue chain is uncharacterized protein (156 aa).

The protein localises to the mitochondrion. This is an uncharacterized protein from Paramecium tetraurelia.